The sequence spans 422 residues: L-2-hydroxyglutarate dehydrogenase (422 aa).

The protein belongs to the L2HGDH family. FAD serves as cofactor.

It is found in the cell inner membrane. It carries out the reaction (S)-2-hydroxyglutarate + a quinone = a quinol + 2-oxoglutarate. It participates in amino-acid degradation. Catalyzes the dehydrogenation of L-2-hydroxyglutarate (L2HG) to alpha-ketoglutarate and couples to the respiratory chain by feeding electrons from the reaction into the membrane quinone pool. Functions in a L-lysine degradation pathway that proceeds via cadaverine, glutarate and L-2-hydroxyglutarate. Also displays some oxidase activity in vitro on L-2-hydroxyglutarate with O2 as the electron acceptor, but this activity is most likely not physiological. This is L-2-hydroxyglutarate dehydrogenase from Salmonella houtenae.